Consider the following 193-residue polypeptide: Large ribosomal subunit protein bL25 (193 aa).

This sequence belongs to the bacterial ribosomal protein bL25 family. CTC subfamily. Part of the 50S ribosomal subunit; part of the 5S rRNA/L5/L18/L25 subcomplex. Contacts the 5S rRNA. Binds to the 5S rRNA independently of L5 and L18.

In terms of biological role, this is one of the proteins that binds to the 5S RNA in the ribosome where it forms part of the central protuberance. The sequence is that of Large ribosomal subunit protein bL25 from Clostridium tetani (strain Massachusetts / E88).